The following is a 121-amino-acid chain: Putative SNURF-like protein (121 aa).

This sequence belongs to the SNURF family.

This Homo sapiens (Human) protein is Putative SNURF-like protein (SNURFL).